Reading from the N-terminus, the 368-residue chain is Spermidine/putrescine import ATP-binding protein PotA (368 aa).

In terms of domain architecture, ABC transporter spans 8-238 (IELKNVSKIF…PVNLFVARFV (231 aa)). Residue 40–47 (GPSGCGKT) participates in ATP binding.

Belongs to the ABC transporter superfamily. Spermidine/putrescine importer (TC 3.A.1.11.1) family. As to quaternary structure, the complex is composed of two ATP-binding proteins (PotA), two transmembrane proteins (PotB and PotC) and a solute-binding protein (PotD).

The protein localises to the cell membrane. The catalysed reaction is ATP + H2O + polyamine-[polyamine-binding protein]Side 1 = ADP + phosphate + polyamineSide 2 + [polyamine-binding protein]Side 1.. Functionally, part of the ABC transporter complex PotABCD involved in spermidine/putrescine import. Responsible for energy coupling to the transport system. The protein is Spermidine/putrescine import ATP-binding protein PotA of Lawsonia intracellularis (strain PHE/MN1-00).